We begin with the raw amino-acid sequence, 357 residues long: Chorismate synthase (357 aa).

Arg-47 serves as a coordination point for NADP(+). FMN contacts are provided by residues Arg-123–Ser-125, Gly-281, Lys-296–Ser-300, and Arg-324.

The protein belongs to the chorismate synthase family. As to quaternary structure, homotetramer. Requires FMNH2 as cofactor.

The enzyme catalyses 5-O-(1-carboxyvinyl)-3-phosphoshikimate = chorismate + phosphate. It functions in the pathway metabolic intermediate biosynthesis; chorismate biosynthesis; chorismate from D-erythrose 4-phosphate and phosphoenolpyruvate: step 7/7. Catalyzes the anti-1,4-elimination of the C-3 phosphate and the C-6 proR hydrogen from 5-enolpyruvylshikimate-3-phosphate (EPSP) to yield chorismate, which is the branch point compound that serves as the starting substrate for the three terminal pathways of aromatic amino acid biosynthesis. This reaction introduces a second double bond into the aromatic ring system. The sequence is that of Chorismate synthase from Chlamydia trachomatis serovar D (strain ATCC VR-885 / DSM 19411 / UW-3/Cx).